The primary structure comprises 488 residues: GTPase Der (488 aa).

One can recognise an EngA-type G 1 domain in the interval Pro-3–Leu-166. Residues Gly-9–Ser-16, Asp-56–Ile-60, and Asn-118–Asp-121 contribute to the GTP site. The segment at Leu-168–Gln-192 is disordered. Over residues Gly-172–Ala-190 the composition is skewed to acidic residues. One can recognise an EngA-type G 2 domain in the interval Ile-200–Thr-373. GTP-binding positions include Gly-206–Ser-213, Asp-253–Val-257, and Asn-318–Asp-321. The KH-like domain occupies Arg-374 to Asp-458.

It belongs to the TRAFAC class TrmE-Era-EngA-EngB-Septin-like GTPase superfamily. EngA (Der) GTPase family. In terms of assembly, associates with the 50S ribosomal subunit.

Functionally, GTPase that plays an essential role in the late steps of ribosome biogenesis. The protein is GTPase Der of Shewanella woodyi (strain ATCC 51908 / MS32).